A 180-amino-acid polypeptide reads, in one-letter code: MGDPKRQRKKYETPSHPWIKERLDRERVLKRNYALKNKKELWRHETQLKEFRRRARRLLAARGKQAEIERQQLLQRLYRLGLLPADAVLDDVLSLTVEDVLERRLQTIVYRKGLARTMKQARQLIVHGHIEVNGQVIRSPGYLVLREEEDTITYAKGSPFAKEGHPERMVIEQAKQGGEA.

One can recognise an S4 RNA-binding domain in the interval 103-165 (RRLQTIVYRK…KGSPFAKEGH (63 aa)).

It belongs to the universal ribosomal protein uS4 family. In terms of assembly, part of the 30S ribosomal subunit. Contacts protein S5. The interaction surface between S4 and S5 is involved in control of translational fidelity.

Functionally, one of the primary rRNA binding proteins, it binds directly to 16S rRNA where it nucleates assembly of the body of the 30S subunit. With S5 and S12 plays an important role in translational accuracy. This Thermococcus kodakarensis (strain ATCC BAA-918 / JCM 12380 / KOD1) (Pyrococcus kodakaraensis (strain KOD1)) protein is Small ribosomal subunit protein uS4.